A 618-amino-acid polypeptide reads, in one-letter code: Probable Xaa-Pro aminopeptidase P (618 aa).

Residues aspartate 415, aspartate 426, glutamate 524, and glutamate 538 each contribute to the Mn(2+) site.

Belongs to the peptidase M24B family. Requires Mn(2+) as cofactor.

It carries out the reaction Release of any N-terminal amino acid, including proline, that is linked to proline, even from a dipeptide or tripeptide.. Functionally, catalyzes the removal of a penultimate prolyl residue from the N-termini of peptides. This Pyricularia oryzae (strain 70-15 / ATCC MYA-4617 / FGSC 8958) (Rice blast fungus) protein is Probable Xaa-Pro aminopeptidase P (AMPP).